Consider the following 214-residue polypeptide: Fruiting body protein SC14 (214 aa).

The first 18 residues, 1–18 (MKLNIAILLAALAATASA), serve as a signal peptide directing secretion. 2 N-linked (GlcNAc...) asparagine glycosylation sites follow: Asn61 and Asn144. Residues 72–195 (LTAHNDERAQ…KSLWYYVCNY (124 aa)) form the SCP domain.

It belongs to the CRISP family.

Its subcellular location is the secreted. The sequence is that of Fruiting body protein SC14 (SC14) from Schizophyllum commune (Split gill fungus).